Consider the following 113-residue polypeptide: Hydrogenase maturation factor HypA (113 aa).

Position 2 (histidine 2) interacts with Ni(2+). Zn(2+) is bound by residues cysteine 73, cysteine 76, cysteine 89, and cysteine 92.

Belongs to the HypA/HybF family.

Its function is as follows. Involved in the maturation of [NiFe] hydrogenases. Required for nickel insertion into the metal center of the hydrogenase. This Moorella thermoacetica (strain ATCC 39073 / JCM 9320) protein is Hydrogenase maturation factor HypA.